The chain runs to 158 residues: Interleukin-17A (158 aa).

Positions 1–25 are cleaved as a signal peptide; sequence MSPGRASSVSLMLLLLLSLAATVKA. Residue Asn-71 is glycosylated (N-linked (GlcNAc...) asparagine). 2 cysteine pairs are disulfide-bonded: Cys-97-Cys-147 and Cys-102-Cys-149.

This sequence belongs to the IL-17 family. As to quaternary structure, homodimer. Forms complexes with IL17RA and IL17RC receptors with 2:1 binding stoichiometry: two receptor chains for one interleukin molecule. IL17A homodimer preferentially drives the formation of IL17RA-IL17RC heterodimeric receptor complex. IL17A homodimer adopts an asymmetrical ternary structure with one IL17RA molecule, allowing for high affinity interactions of one IL17A monomer with one IL17RA molecule (via D1 and D2 domains), while disfavoring binding of a second IL17RA molecule on the other IL17A monomer. Heterodimer with IL17F. IL17A-IL17F forms complexes with IL17RA-IL17RC, but with lower affinity when compared to IL17A homodimer. IL17RA and IL17RC chains cannot distinguish between IL17A and IL17F molecules, potentially enabling the formation of topologically distinct complexes. In terms of tissue distribution, expressed by Th17 cell lineage (at protein level). The expression pattern reflects the differentiation state, with IL17A-IL17F heterodimers produced at higher levels than IL17A-IL17A and IL17F-IL17F dimers in fully differentiated Th17 cells. Expressed in innate lymphoid cells (at protein level). Expressed in gamma-delta T cell subsets (at protein level). Expressed in iNKT cells (at protein level).

It is found in the secreted. In terms of biological role, effector cytokine of innate and adaptive immune system involved in antimicrobial host defense and maintenance of tissue integrity. Signals via IL17RA-IL17RC heterodimeric receptor complex, triggering homotypic interaction of IL17RA and IL17RC chains with TRAF3IP2 adapter. This leads to downstream TRAF6-mediated activation of NF-kappa-B and MAPkinase pathways ultimately resulting in transcriptional activation of cytokines, chemokines, antimicrobial peptides and matrix metalloproteinases, with potential strong immune inflammation. Plays an important role in connecting T cell-mediated adaptive immunity and acute inflammatory response to destroy extracellular bacteria and fungi. As a signature effector cytokine of T-helper 17 cells (Th17), primarily induces neutrophil activation and recruitment at infection and inflammatory sites. In airway epithelium, mediates neutrophil chemotaxis via induction of CXCL1 and CXCL5 chemokines. In secondary lymphoid organs, contributes to germinal center formation by regulating the chemotactic response of B cells to CXCL12 and CXCL13, enhancing retention of B cells within the germinal centers, B cell somatic hypermutation rate and selection toward plasma cells. Effector cytokine of a subset of gamma-delta T cells that functions as part of an inflammatory circuit downstream IL1B, TLR2 and IL23A-IL12B to promote neutrophil recruitment for efficient bacterial clearance. Effector cytokine of innate immune cells including invariant natural killer cell (iNKT) and group 3 innate lymphoid cells that mediate initial neutrophilic inflammation. Involved in the maintenance of the integrity of epithelial barriers during homeostasis and pathogen infection. Upon acute injury, has a direct role in epithelial barrier formation by regulating OCLN localization and tight junction biogenesis. As part of the mucosal immune response induced by commensal bacteria, enhances host's ability to resist pathogenic bacterial and fungal infections by promoting neutrophil recruitment and antimicrobial peptides release. In synergy with IL17F, mediates the production of antimicrobial beta-defensins DEFB1, DEFB103A, and DEFB104A by mucosal epithelial cells, limiting the entry of microbes through the epithelial barriers. Involved in antiviral host defense through various mechanisms. Enhances immunity against West Nile virus by promoting T cell cytotoxicity. May play a beneficial role in influenza A virus (H5N1) infection by enhancing B cell recruitment and immune response in the lung. Contributes to influenza A virus (H1N1) clearance by driving the differentiation of B-1a B cells, providing for production of virus-specific IgM antibodies at first line of host defense. This chain is Interleukin-17A (Il17a), found in Mus musculus (Mouse).